The chain runs to 206 residues: Cytochrome c biogenesis ATP-binding export protein CcmA (206 aa).

An ABC transporter domain is found at 4–205 (LEGIDLTCIR…AGAAIQRLQL (202 aa)). Residue 36–43 (GPNGSGKT) coordinates ATP.

This sequence belongs to the ABC transporter superfamily. CcmA exporter (TC 3.A.1.107) family. The complex is composed of two ATP-binding proteins (CcmA) and two transmembrane proteins (CcmB).

The protein resides in the cell inner membrane. It carries out the reaction heme b(in) + ATP + H2O = heme b(out) + ADP + phosphate + H(+). In terms of biological role, part of the ABC transporter complex CcmAB involved in the biogenesis of c-type cytochromes; once thought to export heme, this seems not to be the case, but its exact role is uncertain. Responsible for energy coupling to the transport system. The chain is Cytochrome c biogenesis ATP-binding export protein CcmA from Nitrosospira multiformis (strain ATCC 25196 / NCIMB 11849 / C 71).